We begin with the raw amino-acid sequence, 394 residues long: Protein LAX PANICLE 2 (394 aa).

Residues 1–193 (MVPARSLAHP…PTPRHHHHDV (193 aa)) form a disordered region. Over residues 8–20 (AHPHPHLVRRRRD) the composition is skewed to basic residues. Positions 60 to 84 (QHDPPKQPPPREADDDHHRIQEREP) are enriched in basic and acidic residues. 3 stretches are compositionally biased toward low complexity: residues 90–101 (TTTRNQRLQLQL), 119–131 (GTSG…SSSN), and 146–155 (GPASPGASAG). Over residues 170–185 (APQPPTPTPTPTPTPT) the composition is skewed to pro residues.

Interacts with LAX1.

Its subcellular location is the nucleus. Its function is as follows. Involved in the regulation of shoot branching by controlling axillary meristem (AM) formation. Functions in association with LAX1 to regulate the process of AM formation. Possesses transactivation activity in yeast. The polypeptide is Protein LAX PANICLE 2 (Oryza sativa subsp. japonica (Rice)).